Consider the following 479-residue polypeptide: Sulfate adenylyltransferase subunit 1 (479 aa).

The tr-type G domain occupies 25-239; that stretch reads KSLLRFLTCG…EVLETVDIQR (215 aa). The interval 34–41 is G1; the sequence is GSVDDGKS. 34-41 provides a ligand contact to GTP; sequence GSVDDGKS. Positions 92–96 are G2; that stretch reads GITID. A G3 region spans residues 113–116; it reads DTPG. GTP contacts are provided by residues 113–117 and 168–171; these read DTPGH and NKMD. The interval 168 to 171 is G4; it reads NKMD. The segment at 206–208 is G5; that stretch reads SAL.

The protein belongs to the TRAFAC class translation factor GTPase superfamily. Classic translation factor GTPase family. CysN/NodQ subfamily. In terms of assembly, heterodimer composed of CysD, the smaller subunit, and CysN.

It catalyses the reaction sulfate + ATP + H(+) = adenosine 5'-phosphosulfate + diphosphate. It functions in the pathway sulfur metabolism; hydrogen sulfide biosynthesis; sulfite from sulfate: step 1/3. Its function is as follows. With CysD forms the ATP sulfurylase (ATPS) that catalyzes the adenylation of sulfate producing adenosine 5'-phosphosulfate (APS) and diphosphate, the first enzymatic step in sulfur assimilation pathway. APS synthesis involves the formation of a high-energy phosphoric-sulfuric acid anhydride bond driven by GTP hydrolysis by CysN coupled to ATP hydrolysis by CysD. The sequence is that of Sulfate adenylyltransferase subunit 1 from Salmonella paratyphi B (strain ATCC BAA-1250 / SPB7).